Consider the following 134-residue polypeptide: Prefoldin subunit 4 (134 aa).

At alanine 2 the chain carries N-acetylalanine. Serine 125 bears the Phosphoserine mark.

The protein belongs to the prefoldin subunit beta family. In terms of assembly, heterohexamer of two PFD-alpha type and four PFD-beta type subunits. Interacts with URI1; the interaction is phosphorylation-dependent and occurs in a growth-dependent manner.

It localises to the nucleus. The protein resides in the cytoplasm. The protein localises to the mitochondrion. In terms of biological role, binds specifically to cytosolic chaperonin (c-CPN) and transfers target proteins to it. Binds to nascent polypeptide chain and promotes folding in an environment in which there are many competing pathways for nonnative proteins. This Bos taurus (Bovine) protein is Prefoldin subunit 4 (PFDN4).